Consider the following 443-residue polypeptide: Tubulin beta chain (443 aa).

Positions 11, 69, 138, 142, 143, 144, 204, and 226 each coordinate GTP. Glutamate 69 provides a ligand contact to Mg(2+). Positions 424 to 443 are disordered; the sequence is QYQDASAEEEGEFEGEEEEA. The segment covering 429–443 has biased composition (acidic residues); it reads SAEEEGEFEGEEEEA.

Belongs to the tubulin family. In terms of assembly, dimer of alpha and beta chains. A typical microtubule is a hollow water-filled tube with an outer diameter of 25 nm and an inner diameter of 15 nM. Alpha-beta heterodimers associate head-to-tail to form protofilaments running lengthwise along the microtubule wall with the beta-tubulin subunit facing the microtubule plus end conferring a structural polarity. Microtubules usually have 13 protofilaments but different protofilament numbers can be found in some organisms and specialized cells. Mg(2+) serves as cofactor.

The protein resides in the cytoplasm. Its subcellular location is the cytoskeleton. Tubulin is the major constituent of microtubules, a cylinder consisting of laterally associated linear protofilaments composed of alpha- and beta-tubulin heterodimers. Microtubules grow by the addition of GTP-tubulin dimers to the microtubule end, where a stabilizing cap forms. Below the cap, tubulin dimers are in GDP-bound state, owing to GTPase activity of alpha-tubulin. The protein is Tubulin beta chain (TUBB) of Chlamydomonas incerta.